Consider the following 764-residue polypeptide: Ribosomal protein S6 kinase alpha-6 (764 aa).

The segment at 1–24 (MLPFAPVEDPWDQEDMEVFGSTSS) is disordered. Residues 93–350 (FDLLKVLGQG…VEEVKRHAFF (258 aa)) enclose the Protein kinase 1 domain. Residues 99–107 (LGQGSFGKV) and K125 each bind ATP. D218 acts as the Proton acceptor in catalysis. 3 positions are modified to phosphoserine: S252, S392, and S409. The AGC-kinase C-terminal domain occupies 351 to 420 (ASIDWNKLYK…VATSIAEEYK (70 aa)). Positions 446–706 (YELKEDIGIG…VLKHPWITQR (261 aa)) constitute a Protein kinase 2 domain. ATP-binding positions include 452–460 (IGIGSYSVC) and K475. Residue D563 is the Proton acceptor of the active site. T601 is modified (phosphothreonine).

The protein belongs to the protein kinase superfamily. AGC Ser/Thr protein kinase family. S6 kinase subfamily. Forms a complex with MAPK3/ERK1 but not with MAPK9 or MAPK14 in serum-starved cells. It depends on Mg(2+) as a cofactor. Phosphorylated at Ser-252, Ser-392, and Ser-409 in serum-starved cells.

It localises to the cytoplasm. The protein localises to the cytosol. Its subcellular location is the nucleus. It carries out the reaction L-seryl-[protein] + ATP = O-phospho-L-seryl-[protein] + ADP + H(+). It catalyses the reaction L-threonyl-[protein] + ATP = O-phospho-L-threonyl-[protein] + ADP + H(+). With respect to regulation, constitutively activated by phosphorylation at Ser-252, Ser-392, and Ser-409 in serum-starved cells. Does not require growth factor stimulation for significant kinase activity. Functionally, constitutively active serine/threonine-protein kinase that exhibits growth-factor-independent kinase activity and that may participate in p53/TP53-dependent cell growth arrest signaling and play an inhibitory role during embryogenesis. This chain is Ribosomal protein S6 kinase alpha-6 (Rps6ka6), found in Mus musculus (Mouse).